We begin with the raw amino-acid sequence, 1545 residues long: ATP-binding cassette sub-family C member 2 (1545 aa).

Residues 1-27 are Extracellular-facing; sequence MLEKFCNSTFWNSSFLDSPEADLPLCF. N-linked (GlcNAc...) asparagine glycans are attached at residues asparagine 7 and asparagine 12. The chain crosses the membrane as a helical span at residues 28–48; sequence EQTVLVWIPLGYLWLLAPWQL. Residues 49 to 68 are Cytoplasmic-facing; the sequence is LHVYKSRTKRSSTTKLYLAK. Residues 69-89 traverse the membrane as a helical segment; it reads QVFVGFLLILAAIELALVLTE. Residues 90-93 lie on the Extracellular side of the membrane; sequence DSGQ. A helical membrane pass occupies residues 94–114; the sequence is ATVPAVRYTNPSLYLGTWLLV. Topologically, residues 115 to 126 are cytoplasmic; it reads LLIQYSRQWCVQ. Residues 127–147 traverse the membrane as a helical segment; the sequence is KNSWFLSLFWILSILCGTFQF. Residues 148 to 165 lie on the Extracellular side of the membrane; it reads QTLIRTLLQGDNSNLAYS. The chain crosses the membrane as a helical span at residues 166-186; it reads CLFFISYGFQILILIFSAFSE. At 187 to 313 the chain is on the cytoplasmic side; sequence NNESSNNPSS…DVPKSWLMKA (127 aa). The disordered stretch occupies residues 253–284; the sequence is ARRALQRRQEKSSQQNSGARLPGLNKNQSQSQ. Phosphoserine is present on residues serine 281 and serine 283. A helical membrane pass occupies residues 314–334; it reads LFKTFYMVLLKSFLLKLVNDI. In terms of domain architecture, ABC transmembrane type-1 1 spans 322-605; it reads LLKSFLLKLV…LPMMISSMLQ (284 aa). Topologically, residues 335–360 are extracellular; sequence FTFVSPQLLKLLISFASDRDTYLWIG. The helical transmembrane segment at 361-381 threads the bilayer; sequence YLCAILLFTAALIQSFCLQCY. Over 382-437 the chain is Cytoplasmic; it reads FQLCFKLGVKVRTAIMASVYKKALTLSNLARKEYTVGETVNLMSVDAQKLMDVTNF. Residues 438–458 traverse the membrane as a helical segment; that stretch reads MHMLWSSVLQIVLSIFFLWRE. Topologically, residues 459-461 are extracellular; the sequence is LGP. The helical transmembrane segment at 462–482 threads the bilayer; it reads SVLAGVGVMVLVIPINAILST. Residues 483–544 lie on the Cytoplasmic side of the membrane; it reads KSKTIQVKNM…NLLAFSQLQC (62 aa). The chain crosses the membrane as a helical span at residues 545 to 565; that stretch reads VVIFVFQLTPVLVSVVTFSVY. At 566 to 587 the chain is on the extracellular side; the sequence is VLVDSNNILDAQKAFTSITLFN. A helical membrane pass occupies residues 588 to 608; it reads ILRFPLSMLPMMISSMLQASV. Residues 609 to 971 are Cytoplasmic-facing; sequence STERLEKYLG…VKFSIYLEYL (363 aa). The 225-residue stretch at 637-861 folds into the ABC transporter 1 domain; sequence MQFSEASFTW…KGEFAKNLKT (225 aa). 671–678 contacts ATP; it reads GPVGSGKS. Serine 878, serine 926, serine 930, and serine 938 each carry phosphoserine. Residues 972–992 traverse the membrane as a helical segment; that stretch reads QAIGLFSIFFIILAFVMNSVA. The region spanning 979-1264 is the ABC transmembrane type-1 2 domain; sequence IFFIILAFVM…LVRMTSEIET (286 aa). The Extracellular segment spans residues 993-1033; sequence FIGSNLWLSAWTSDSKIFNSTDYPASQRDMRVGVYGALGLA. N-linked (GlcNAc...) asparagine glycosylation is present at asparagine 1011. Residues 1034 to 1054 traverse the membrane as a helical segment; sequence QGIFVFIAHFWSAFGFVHASN. Residues 1055–1097 are Cytoplasmic-facing; the sequence is ILHKQLLNNILRAPMRFFDTTPTGRIVNRFAGDISTVDDTLPQ. The chain crosses the membrane as a helical span at residues 1098–1118; it reads SLRSWITCFLGIISTLVMICM. A topological domain (extracellular) is located at residue alanine 1119. The helical transmembrane segment at 1120 to 1140 threads the bilayer; it reads TPVFTIIVIPLGIIYVSVQMF. At 1141–1211 the chain is on the cytoplasmic side; the sequence is YVSTSRQLRR…TSNRWLAIRL (71 aa). A helical transmembrane segment spans residues 1212–1232; that stretch reads ELVGNLTVFFSALMMVIYRDT. Topologically, residues 1233 to 1234 are extracellular; the sequence is LS. A helical transmembrane segment spans residues 1235–1255; the sequence is GDTVGFVLSNALNITQTLNWL. Over 1256 to 1545 the chain is Cytoplasmic; the sequence is VRMTSEIETN…GIENVNSTKF (290 aa). Positions 1300-1534 constitute an ABC transporter 2 domain; sequence IQFNNYQVRY…PGPFYFMAKE (235 aa). Residue 1334 to 1341 participates in ATP binding; sequence GRTGAGKS. Phosphoserine is present on serine 1438.

Belongs to the ABC transporter superfamily. ABCC family. Conjugate transporter (TC 3.A.1.208) subfamily. Expressed by polarized cells in liver, kidney and intestine. The highest expression is found in liver. Expressed in small intestine.

It is found in the apical cell membrane. It carries out the reaction ATP + H2O + xenobioticSide 1 = ADP + phosphate + xenobioticSide 2.. It catalyses the reaction an S-substituted glutathione(in) + ATP + H2O = an S-substituted glutathione(out) + ADP + phosphate + H(+). The enzyme catalyses taurolithocholate 3-sulfate(in) + ATP + H2O = taurolithocholate 3-sulfate(out) + ADP + phosphate + H(+). The catalysed reaction is leukotriene C4(in) + ATP + H2O = leukotriene C4(out) + ADP + phosphate + H(+). It carries out the reaction 17beta-estradiol 17-O-(beta-D-glucuronate)(in) + ATP + H2O = 17beta-estradiol 17-O-(beta-D-glucuronate)(out) + ADP + phosphate + H(+). It catalyses the reaction (4Z,15Z)-bilirubin IXalpha C8-beta-D-glucuronoside(in) + ATP + H2O = (4Z,15Z)-bilirubin IXalpha C8-beta-D-glucuronoside(out) + ADP + phosphate + H(+). The enzyme catalyses (4Z,15Z)-bilirubin IXalpha C8,C12-beta-D-bisglucuronoside(in) + ATP + H2O = (4Z,15Z)-bilirubin IXalpha C8,C12-beta-D-bisglucuronoside(out) + ADP + phosphate + H(+). Its function is as follows. ATP-dependent transporter of the ATP-binding cassette (ABC) family that binds and hydrolyzes ATP to enable active transport of various substrates including many drugs, toxicants and endogenous compound across cell membranes. Transports a wide variety of conjugated organic anions such as sulfate-, glucuronide- and glutathione (GSH)-conjugates of endo- and xenobiotics substrates. Mediates hepatobiliary excretion of mono- and bis-glucuronidated bilirubin molecules and therefore play an important role in bilirubin detoxification. Also mediates hepatobiliary excretion of others glucuronide conjugates such as 17beta-estradiol 17-glucosiduronic acid and leukotriene C4. Transports sulfated bile salt such as taurolithocholate sulfate. Transports various anticancer drugs, such as anthracycline, vinca alkaloid and methotrexate and HIV-drugs such as protease inhibitors. Confers resistance to several anti-cancer drugs including cisplatin, doxorubicin, epirubicin, methotrexate, etoposide and vincristine. This Homo sapiens (Human) protein is ATP-binding cassette sub-family C member 2.